A 466-amino-acid chain; its full sequence is GTPase Der (466 aa).

EngA-type G domains lie at 30 to 193 (PVVA…PEVS) and 203 to 376 (RRVA…ASWD). Residues 36–43 (GRPNVGKS), 83–87 (DTGGW), 145–148 (NKVD), 209–216 (GKPNVGKS), 256–260 (DTAGL), and 321–324 (NKWD) contribute to the GTP site. Residues 377 to 459 (TRIATGPLNS…PIRINVRVRE (83 aa)) form the KH-like domain.

Belongs to the TRAFAC class TrmE-Era-EngA-EngB-Septin-like GTPase superfamily. EngA (Der) GTPase family. In terms of assembly, associates with the 50S ribosomal subunit.

In terms of biological role, GTPase that plays an essential role in the late steps of ribosome biogenesis. The polypeptide is GTPase Der (Mycobacterium avium (strain 104)).